The sequence spans 127 residues: MORF4 family-associated protein 1 (127 aa).

Positions 76–97 are disordered; that stretch reads ESALNHLQNPDDGAEGRGTKRC. Residues 92-126 adopt a coiled-coil conformation; sequence RGTKRCEKAEEKAKEIAKMAEMLVELVRRIEKSES.

This sequence belongs to the MORF4 family-associated protein family. As to quaternary structure, found in a complex composed of MORF4L1, MRFAP1 and RB1. Interacts via its N-terminus with MORF4L1. Interacts with CSTB and MORF4L2.

Its subcellular location is the nucleus. It localises to the cytoplasm. The protein localises to the perinuclear region. This is MORF4 family-associated protein 1 from Bos taurus (Bovine).